The primary structure comprises 455 residues: Genome polyprotein (455 aa).

Residue Cys5 is the For nuclear inclusion protein A activity of the active site. A compositionally biased stretch (basic and acidic residues) spans 182–198; it reads NLDAGKESKKETSDKGN. Positions 182–225 are disordered; the sequence is NLDAGKESKKETSDKGNKPQNSQVGQGSKEPTKTGTVSKDVNVG.

The protein belongs to the potyviridae genome polyprotein family. In terms of processing, genome polyprotein of potyviruses undergoes post-translational proteolytic processing by the main proteinase NIa-pro resulting in the production of at least ten individual proteins. The P1 proteinase and the HC-pro cleave only their respective C-termini autocatalytically. 6K1 is essential for proper proteolytic separation of P3 from CI.

The protein localises to the virion. The enzyme catalyses RNA(n) + a ribonucleoside 5'-triphosphate = RNA(n+1) + diphosphate. Functionally, an RNA-dependent RNA polymerase that plays an essential role in the virus replication. Its function is as follows. Involved in aphid transmission, cell-to-cell and systemis movement, encapsidation of the viral RNA and in the regulation of viral RNA amplification. In Citrullus lanatus (Watermelon), this protein is Genome polyprotein.